The following is a 179-amino-acid chain: Proteasome chaperone 3 (179 aa).

Belongs to the PSMG3 family. Component of the 20S proteasome chaperone. Forms a heterodimer with POC4 that binds to proteasome precursors. Interacts with POP2.

Involved in 20S proteasome assembly, facilitating the alpha-ring formation. This is Proteasome chaperone 3 (IRC25) from Saccharomyces cerevisiae (strain ATCC 204508 / S288c) (Baker's yeast).